We begin with the raw amino-acid sequence, 140 residues long: Holo-[acyl-carrier-protein] synthase (140 aa).

The Mg(2+) site is built by Asp-8 and Glu-62.

Belongs to the P-Pant transferase superfamily. AcpS family. It depends on Mg(2+) as a cofactor.

Its subcellular location is the cytoplasm. The catalysed reaction is apo-[ACP] + CoA = holo-[ACP] + adenosine 3',5'-bisphosphate + H(+). In terms of biological role, transfers the 4'-phosphopantetheine moiety from coenzyme A to a Ser of acyl-carrier-protein. The chain is Holo-[acyl-carrier-protein] synthase from Cupriavidus pinatubonensis (strain JMP 134 / LMG 1197) (Cupriavidus necator (strain JMP 134)).